Here is a 501-residue protein sequence, read N- to C-terminus: Aspartate--tRNA ligase, cytoplasmic (501 aa).

Thr52 is modified (phosphothreonine). The residue at position 74 (Lys74) is an N6-acetyllysine. An L-aspartate-binding site is contributed by Glu229. Ser249 is subject to Phosphoserine. The interval 251 to 254 (QLYK) is aspartate. Residue Arg273 participates in L-aspartate binding. ATP-binding positions include 273-275 (RAE) and 281-283 (RHL). Lys374 is modified (N6-acetyllysine). Residues 411 to 415 (KQSNS) form a binding site for the 3'-end of tRNA region. ATP is bound at residue Glu424. The L-aspartate site is built by Ser427 and Arg431. 472–475 (GLER) contributes to the ATP binding site. Thr500 is subject to Phosphothreonine; by PKA.

It belongs to the class-II aminoacyl-tRNA synthetase family. Type 2 subfamily. As to quaternary structure, homodimer. Part of a multisubunit complex that groups tRNA ligases for Arg (RARS1), Asp (DARS1), Gln (QARS1), Ile (IARS1), Leu (LARS1), Lys (KARS1), Met (MARS1) the bifunctional ligase for Glu and Pro (EPRS1) and the auxiliary subunits AIMP1/p43, AIMP2/p38 and EEF1E1/p18.

The protein resides in the cytoplasm. It catalyses the reaction tRNA(Asp) + L-aspartate + ATP = L-aspartyl-tRNA(Asp) + AMP + diphosphate. Catalyzes the specific attachment of an amino acid to its cognate tRNA in a 2 step reaction: the amino acid (AA) is first activated by ATP to form AA-AMP and then transferred to the acceptor end of the tRNA. This Pongo abelii (Sumatran orangutan) protein is Aspartate--tRNA ligase, cytoplasmic (DARS1).